The chain runs to 131 residues: MSEIPADLYYTSEHEWVLRTGDDTVRVGITDYAQSALGDVVFVQLPDVGADVASGDAFGEVESTKSVSDLYAPVTAKVVAVNGDLEGSPELVNSDPYGEGWLVDLRVEAGTLDEALGGLLDAEGYRAVVTE.

Residues 24 to 106 form the Lipoyl-binding domain; it reads TVRVGITDYA…YGEGWLVDLR (83 aa). Lysine 65 carries the post-translational modification N6-lipoyllysine.

The protein belongs to the GcvH family. As to quaternary structure, the glycine cleavage system is composed of four proteins: P, T, L and H. It depends on (R)-lipoate as a cofactor.

The glycine cleavage system catalyzes the degradation of glycine. The H protein shuttles the methylamine group of glycine from the P protein to the T protein. This is Glycine cleavage system H protein from Mycolicibacterium smegmatis (strain ATCC 700084 / mc(2)155) (Mycobacterium smegmatis).